The sequence spans 252 residues: MLTKRIIPCLDVTAGRVVKGVNFVGLRDAGDPVEIAKRYDTQGADELTFLDITATSDGRDLILHIIEDVASQVFIPLTVGGGVRTVADVRRLLNAGADKVSMNSSAVANPDLVSDAAAYYGSQCIVVAIDAKQTEAGNWEVFTHGGRTATGMDVVEWAKEVAKRGAGEILLTSINRDGSKDGFDLALTAAVSDAVSLPVIASGGVGNLQHLVDGITKGHADAVLAASICHYSEYTVGQAKEYMAAQGIPVRI.

Catalysis depends on residues D11 and D130.

This sequence belongs to the HisA/HisF family. As to quaternary structure, heterodimer of HisH and HisF.

The protein localises to the cytoplasm. The enzyme catalyses 5-[(5-phospho-1-deoxy-D-ribulos-1-ylimino)methylamino]-1-(5-phospho-beta-D-ribosyl)imidazole-4-carboxamide + L-glutamine = D-erythro-1-(imidazol-4-yl)glycerol 3-phosphate + 5-amino-1-(5-phospho-beta-D-ribosyl)imidazole-4-carboxamide + L-glutamate + H(+). The protein operates within amino-acid biosynthesis; L-histidine biosynthesis; L-histidine from 5-phospho-alpha-D-ribose 1-diphosphate: step 5/9. IGPS catalyzes the conversion of PRFAR and glutamine to IGP, AICAR and glutamate. The HisF subunit catalyzes the cyclization activity that produces IGP and AICAR from PRFAR using the ammonia provided by the HisH subunit. The protein is Imidazole glycerol phosphate synthase subunit HisF of Polynucleobacter necessarius subsp. necessarius (strain STIR1).